A 496-amino-acid polypeptide reads, in one-letter code: L-arabinose isomerase (496 aa).

4 residues coordinate Mn(2+): E302, E329, H346, and H445.

It belongs to the arabinose isomerase family. Mn(2+) serves as cofactor.

The enzyme catalyses beta-L-arabinopyranose = L-ribulose. The protein operates within carbohydrate degradation; L-arabinose degradation via L-ribulose; D-xylulose 5-phosphate from L-arabinose (bacterial route): step 1/3. Functionally, catalyzes the conversion of L-arabinose to L-ribulose. The chain is L-arabinose isomerase from Thermotoga maritima (strain ATCC 43589 / DSM 3109 / JCM 10099 / NBRC 100826 / MSB8).